A 1336-amino-acid chain; its full sequence is MATEIGSPPRFFHMPRFQHQAPRQLFYKRPDFAQQQAMQQLTFDGKRMRKAVNRKTIDYNPSVIKYLENRIWQRDQRDMRAIQPDAGYYNDLVPPIGMLNNPMNAVTTKFVRTSTNKVKCPVFVVRWTPEGRRLVTGASSGEFTLWNGLTFNFETILQAHDSPVRAMTWSHNDMWMLTADHGGYVKYWQSNMNNVKMFQAHKEAIREASFSPTDNKFATCSDDGTVRIWDFLRCHEERILRGHGADVKCVDWHPTKGLVVSGSKDSQQPIKFWDPKTGQSLATLHAHKNTVMEVKLNLNGNWLLTASRDHLCKLFDIRNLKEELQVFRGHKKEATAVAWHPVHEGLFASGGSDGSLLFWHVGVEKEVGGMEMAHEGMIWSLAWHPLGHILCSGSNDHTSKFWTRNRPGDKMRDRYNLNLLPGMSEDGVEYDDLEPNSLAVIPGMGIPEQLKLAMEQEQMGKDESNEIEMTIPGLDWGMEEVMQKDQKKVPQKKVPYAKPIPAQFQQAWMQNKVPIPAPNEVLNDRKEDIKLEEKKKTQAEIEQEMATLQYTNPQLLEQLKIERLAQKQVEQIQPPPSSGTPLLGPQPFPGQGPMSQIPQGFQQPHPSQQMPMNMAQMGPPGPQGQFRPPGPQGQMGPQGPPLHQGGGGPQGFMGPQGPQGPPQGLPRPQDMHGPQGMQRHPGPHGPLGPQGPPGPQGSSGPQGHMGPQGPPGPQGHIGPQGPPGPQGHLGPQGPPGTQGMQGPPGPRGMQGPPHPHGIQGGPGSQGIQGPVSQGPLMGLNPRGMQGPPGPRENQGPAPQGMIMGHPPQEMRGPHPPGGLLGHGPQEMRGPQEIRGMQGPPPQGSMLGPPQELRGPPGSQSQQGPPQGSLGPPPQGGMQGPPGPQGQQNPARGPHPSQGPIPFQQQKTPLLGDGPRAPFNQEGQSTGPPPLIPGLGQQGAQGRIPPLNPGQGPGPNKGDSRGPPNHHMGPMSERRHEQSGGPEHGPERGPFRGGQDCRGPPDRRGPHPDFPDDFSRPDDFHPDKRFGHRLREFEGRGGPLPQEEKWRRGGPGPPFPPDHREFSEGDGRGAARGPPGAWEGRRPGDERFPRDPEDPRFRGRREESFRRGAPPRHEGRAPPRGRDGFPGPEDFGPEENFDASEEAARGRDLRGRGRGTPRGGRKGLLPTPDEFPRFEGGRKPDSWDGNREPGPGHEHFRDTPRPDHPPHDGHSPASRERSSSLQGMDMASLPPRKRPWHDGPGTSEHREMEAPGGPSEDRGGKGRGGPGPAQRVPKSGRSSSLDGEHHDGYHRDEPFGGPPGSGTPSRGGRSGSNWGRGSNMNSGPPRRGASRGGGRGR.

Position 2 is an N-acetylalanine (alanine 2). Residue serine 7 is modified to Phosphoserine. The residue at position 46 (lysine 46) is an N6-acetyllysine. WD repeat units follow at residues lysine 117–isoleucine 156, alanine 159–phenylalanine 198, alanine 200–isoleucine 239, glycine 242–threonine 283, alanine 286–glutamine 325, glycine 329–glycine 369, and alanine 373–arginine 412. Glycyl lysine isopeptide (Lys-Gly) (interchain with G-Cter in SUMO2) cross-links involve residues lysine 526, lysine 530, and lysine 560. The tract at residues glutamine 568–arginine 1336 is disordered. A compositionally biased stretch (pro residues) spans glutamine 573 to glycine 590. The segment covering methionine 594–serine 607 has biased composition (polar residues). Residues glutamine 608–histidine 643 are compositionally biased toward low complexity. One can recognise a Collagen-like domain in the interval glycine 618–proline 770. Pro residues predominate over residues proline 683–proline 695. Low complexity-rich tracts occupy residues glutamine 696–proline 707 and glutamine 726–glycine 751. Arginine 782 is subject to Omega-N-methylarginine. Low complexity predominate over residues glycine 854 to leucine 869. At arginine 915 the chain carries Asymmetric dimethylarginine. Positions proline 932–glycine 941 are enriched in low complexity. Composition is skewed to basic and acidic residues over residues serine 971 to proline 989 and glycine 998 to glycine 1034. Arginine 987 is subject to Omega-N-methylarginine. Arginine 1035 bears the Omega-N-methylarginine mark. Basic and acidic residues-rich tracts occupy residues proline 1056–glycine 1068 and glutamate 1078–aspartate 1122. Residues phenylalanine 1130–glutamate 1140 are compositionally biased toward acidic residues. Residues glutamate 1141 to glycine 1150 show a composition bias toward basic and acidic residues. Positions arginine 1151–arginine 1160 are enriched in basic residues. Basic and acidic residues-rich tracts occupy residues glutamate 1169 to serine 1217 and serine 1242 to glycine 1259. Serine 1210 carries the post-translational modification Phosphoserine. Arginine 1262 is modified (omega-N-methylarginine). Basic and acidic residues predominate over residues aspartate 1281–proline 1293. Residues glycine 1301–arginine 1326 show a composition bias toward low complexity. Residue arginine 1315 is modified to Asymmetric dimethylarginine; alternate. An Omega-N-methylarginine; alternate modification is found at arginine 1315.

This sequence belongs to the WD repeat WDR33 family. Component of the cleavage and polyadenylation specificity factor (CPSF) module of the pre-mRNA 3'-end processing complex. Interacts with CPSF3/CPSF73. As to expression, most highly expressed in testis.

The protein localises to the nucleus. Functionally, essential for both cleavage and polyadenylation of pre-mRNA 3' ends. This chain is pre-mRNA 3' end processing protein WDR33 (WDR33), found in Homo sapiens (Human).